Reading from the N-terminus, the 525-residue chain is GMP synthase [glutamine-hydrolyzing] (525 aa).

The Glutamine amidotransferase type-1 domain maps to 8 to 207; sequence KILILDFGSQ…ALDICGCKAN (200 aa). The Nucleophile role is filled by Cys-85. Active-site residues include His-181 and Glu-183. The 193-residue stretch at 208–400 folds into the GMPS ATP-PPase domain; the sequence is WKPSSIIEDA…LGLPYNMLYR (193 aa). 235-241 provides a ligand contact to ATP; the sequence is SGGVDSS.

In terms of assembly, homodimer.

The catalysed reaction is XMP + L-glutamine + ATP + H2O = GMP + L-glutamate + AMP + diphosphate + 2 H(+). It participates in purine metabolism; GMP biosynthesis; GMP from XMP (L-Gln route): step 1/1. Functionally, catalyzes the synthesis of GMP from XMP. This is GMP synthase [glutamine-hydrolyzing] from Shewanella frigidimarina (strain NCIMB 400).